The following is a 66-amino-acid chain: Nigrocin-2ISb (66 aa).

An N-terminal signal peptide occupies residues 1-22 (MFTLKKSMLLLFFLGTINLSLC). Residues 23–43 (QEERDAEEERRDEDNAKMEEI) constitute a propeptide, removed in mature form. Cys60 and Cys66 form a disulfide bridge.

In terms of tissue distribution, expressed by the skin glands.

The protein resides in the secreted. Its function is as follows. Has antimicrobial activity against Gram-negative bacterium E.coli ATCC 8739 (MIC=50 ug), against Gram positive bacteria S.aureus ATCC 6538 (MIC=3.1 ug), methicillin-resistant S.aureus ATCC 43300 (MIC=12.5 ug), B.subtilis ATCC 6633 (MIC=12.5 ug) and against fungus C.albicans ATCC 90028 (MIC=50 ug). The polypeptide is Nigrocin-2ISb (Odorrana ishikawae (Ishikawa's frog)).